The primary structure comprises 254 residues: Imidazole glycerol phosphate synthase subunit HisF (254 aa).

Residues aspartate 11 and aspartate 130 contribute to the active site.

This sequence belongs to the HisA/HisF family. In terms of assembly, heterodimer of HisH and HisF.

Its subcellular location is the cytoplasm. It carries out the reaction 5-[(5-phospho-1-deoxy-D-ribulos-1-ylimino)methylamino]-1-(5-phospho-beta-D-ribosyl)imidazole-4-carboxamide + L-glutamine = D-erythro-1-(imidazol-4-yl)glycerol 3-phosphate + 5-amino-1-(5-phospho-beta-D-ribosyl)imidazole-4-carboxamide + L-glutamate + H(+). The protein operates within amino-acid biosynthesis; L-histidine biosynthesis; L-histidine from 5-phospho-alpha-D-ribose 1-diphosphate: step 5/9. In terms of biological role, IGPS catalyzes the conversion of PRFAR and glutamine to IGP, AICAR and glutamate. The HisF subunit catalyzes the cyclization activity that produces IGP and AICAR from PRFAR using the ammonia provided by the HisH subunit. This Laribacter hongkongensis (strain HLHK9) protein is Imidazole glycerol phosphate synthase subunit HisF.